Consider the following 682-residue polypeptide: Protein SYG1 homolog (682 aa).

The SPX domain maps to 1-219 (MKFGKVIEGQ…HTDLQGFWVD (219 aa)). Topologically, residues 1-274 (MKFGKVIEGQ…KEHFSANSMR (274 aa)) are cytoplasmic. The chain crosses the membrane as a helical span at residues 275 to 295 (FGLLFGAGLPLAIEAACYYNA). The Extracellular segment spans residues 296–300 (TEQSS). Residues 301-321 (YLLQIWGGFFLVIFAFVLFDL) form a helical membrane-spanning segment. Topologically, residues 322–348 (DCYVWEKTRVNYMLIFEFNQRKSLNWR) are cytoplasmic. The chain crosses the membrane as a helical span at residues 349–369 (QHLEIVGAVFFIFSLFFFLCM). Topologically, residues 370–377 (RNFFPGFT) are extracellular. A helical transmembrane segment spans residues 378-398 (IYFPALFLGVVGTFLIAPVIV). Topologically, residues 399–406 (PYWRMRRY) are cytoplasmic. The chain crosses the membrane as a helical span at residues 407–424 (LIIQLIRVFLSGLSTVHF). At 425-426 (QD) the chain is on the extracellular side. A helical membrane pass occupies residues 427–447 (FFFADQMVSLTYACGNISLFF). Residues 448–525 (CLYKRLWRQP…WRIHPGLKYR (78 aa)) are Cytoplasmic-facing. The region spanning 459-654 (LCNSSHSPLL…VKPHSDVFVS (196 aa)) is the EXS domain. A helical membrane pass occupies residues 526–546 (VLYTIFAGVNSLFSYTWDILM). Topologically, residues 547–571 (DWNLLVRKDGRWQFREHRILKQLWP) are extracellular. Residues 572-592 (YIIAMILNFIVRSSFIFYCIF) traverse the membrane as a helical segment. Residues 593–682 (PNHIQHSSGI…QTDVDEAQFS (90 aa)) lie on the Cytoplasmic side of the membrane. The interval 659–682 (SDKNYTDDEDSMDDQTDVDEAQFS) is disordered. Over residues 665-682 (DDEDSMDDQTDVDEAQFS) the composition is skewed to acidic residues.

Belongs to the SYG1 (TC 2.A.94) family.

It localises to the cell membrane. Its function is as follows. May function in G-protein coupled signal transduction. This is Protein SYG1 homolog from Schizosaccharomyces pombe (strain 972 / ATCC 24843) (Fission yeast).